The primary structure comprises 208 residues: MGIFVVIEGIDGAGKSTQAKLLAKWFEKKGYEVILTKEPTDTAFGKLIRKLVLTGGREGIIDGARISHEAEALLFAADRAEHVHKLIKPALESGKVVISDRYFYSSLAYQWARGLDLQWLIDLNRFAVRPDLVVLLDLPVKESMRRINGRSIKTEFDKIVELQKRVRENYLKLAEMFPEIRIVNAQNSIEDIHRDIVGLVEQEILSGI.

Glycine 9–serine 16 lines the ATP pocket.

It belongs to the thymidylate kinase family.

It carries out the reaction dTMP + ATP = dTDP + ADP. This chain is Probable thymidylate kinase, found in Thermococcus gammatolerans (strain DSM 15229 / JCM 11827 / EJ3).